The following is a 132-amino-acid chain: NADH-quinone oxidoreductase subunit A 2 (132 aa).

3 consecutive transmembrane segments (helical) span residues 9–29 (AWAF…MLGL), 66–86 (LVAM…LWAV), and 93–113 (WAGF…LFYL).

It belongs to the complex I subunit 3 family. In terms of assembly, NDH-1 is composed of 13 different subunits. Subunits NuoA, H, J, K, L, M, N constitute the membrane sector of the complex.

It is found in the cell inner membrane. The catalysed reaction is a quinone + NADH + 5 H(+)(in) = a quinol + NAD(+) + 4 H(+)(out). NDH-1 shuttles electrons from NADH, via FMN and iron-sulfur (Fe-S) centers, to quinones in the respiratory chain. The immediate electron acceptor for the enzyme in this species is believed to be ubiquinone. Couples the redox reaction to proton translocation (for every two electrons transferred, four hydrogen ions are translocated across the cytoplasmic membrane), and thus conserves the redox energy in a proton gradient. This Pseudomonas paraeruginosa (strain DSM 24068 / PA7) (Pseudomonas aeruginosa (strain PA7)) protein is NADH-quinone oxidoreductase subunit A 2.